Here is a 502-residue protein sequence, read N- to C-terminus: Lysine--tRNA ligase (502 aa).

Residues glutamate 411 and glutamate 418 each contribute to the Mg(2+) site.

The protein belongs to the class-II aminoacyl-tRNA synthetase family. As to quaternary structure, homodimer. Requires Mg(2+) as cofactor.

It is found in the cytoplasm. The enzyme catalyses tRNA(Lys) + L-lysine + ATP = L-lysyl-tRNA(Lys) + AMP + diphosphate. The chain is Lysine--tRNA ligase from Clostridium kluyveri (strain ATCC 8527 / DSM 555 / NBRC 12016 / NCIMB 10680 / K1).